Consider the following 530-residue polypeptide: AarF domain-containing protein kinase 1 (530 aa).

In terms of domain architecture, Protein kinase spans 155–467 (SFDDTPLGTA…ASSFLNMSRC (313 aa)). ATP is bound by residues 161–169 (LGTASLAQV) and lysine 183. Aspartate 315 (proton acceptor) is an active-site residue.

It belongs to the protein kinase superfamily. ADCK protein kinase family.

The protein resides in the mitochondrion. Functionally, appears to be essential for maintaining mitochondrial cristae formation and mitochondrial function by acting via YME1L1 in a kinase-independent manner to regulate essential mitochondrial structural proteins OPA1 and IMMT. The action of this enzyme is not yet clear. It is not known if it has protein kinase activity and what type of substrate it would phosphorylate (Ser, Thr or Tyr). The chain is AarF domain-containing protein kinase 1 from Homo sapiens (Human).